A 561-amino-acid polypeptide reads, in one-letter code: Nephronectin (561 aa).

Residues 1–19 form the signal peptide; the sequence is MAVLLAAVLASSLYLQVAA. One can recognise an EGF-like 1 domain in the interval 52–87; that stretch reads SWGQCQPVCQPQCKHGECVGPNKCKCHPGFAGKTCN. Disulfide bonds link Cys-56/Cys-69, Cys-60/Cys-75, Cys-77/Cys-86, Cys-93/Cys-104, Cys-100/Cys-113, and Cys-115/Cys-127. One can recognise an EGF-like 2; calcium-binding domain in the interval 89-128; the sequence is DLNECGLKPRPCKHRCMNTFGSYKCYCLNGYMLLPDGSCS. Positions 132–168 constitute an EGF-like 3 domain; that stretch reads SCSMANCQYGCDVVKGQVRCQCPSPGLQLAPDGRTCV. The EGF-like 4; calcium-binding domain occupies 169-213; sequence DIDECATGRVSCPRFRQCVNTFGSYICKCHTGFDLMYIGGKYQCH. 6 disulfides stabilise this stretch: Cys-173–Cys-186, Cys-180–Cys-195, Cys-197–Cys-212, Cys-218–Cys-231, Cys-225–Cys-240, and Cys-242–Cys-253. Positions 214–254 constitute an EGF-like 5; calcium-binding domain; it reads DIDECSLGQHQCSSYARCYNIHGSYKCQCRDGYEGDGLNCV. A disordered region spans residues 266–370; the sequence is PIHMPERNGT…TSTTTRVITV (105 aa). Over residues 307–316 the composition is skewed to low complexity; it reads TNRPTSKPTT. The segment covering 317–348 has biased composition (pro residues); sequence RPTPNPTPQPTPPPPPPLPTEPRTTPLPPTPE. The segment covering 352 to 366 has biased composition (low complexity); it reads TRPTTIAPATSTTTR. The short motif at 382–384 is the Integrin interaction element; the sequence is RGD. In terms of domain architecture, MAM spans 420-561; that stretch reads HSCNFDHGLC…DDVSLKRGRC (142 aa).

It belongs to the nephronectin family. Homodimer and homotrimer. Expressed in kidney (at protein level).

It localises to the secreted. The protein localises to the extracellular space. The protein resides in the extracellular matrix. Functional ligand of integrin alpha-8/beta-1 in kidney development. Regulates the expression of GDNF with integrin alpha-8/beta-1 which is essential for kidney development. May also play a role in the development and function of various tissues, regulating cell adhesion, spreading and survival through the binding of several integrins. This Mus musculus (Mouse) protein is Nephronectin (Npnt).